We begin with the raw amino-acid sequence, 437 residues long: UDP-N-acetylmuramate--L-alanine ligase (437 aa).

108-114 (GAHGKTS) contacts ATP.

The protein belongs to the MurCDEF family.

It localises to the cytoplasm. It carries out the reaction UDP-N-acetyl-alpha-D-muramate + L-alanine + ATP = UDP-N-acetyl-alpha-D-muramoyl-L-alanine + ADP + phosphate + H(+). It functions in the pathway cell wall biogenesis; peptidoglycan biosynthesis. In terms of biological role, cell wall formation. The chain is UDP-N-acetylmuramate--L-alanine ligase from Staphylococcus aureus (strain MRSA252).